Here is a 355-residue protein sequence, read N- to C-terminus: 3'-5' exonuclease (355 aa).

The disordered stretch occupies residues 1 to 119 (MDKFLIKMPI…TPSPEKVKPE (119 aa)). 2 stretches are compositionally biased toward basic and acidic residues: residues 13-29 (KNNETPEQKPIVKKETP) and 71-91 (KNLDTLEVNTEKNTAESENPP). Phosphoserine is present on residues Ser-104 and Ser-112. The 3'-5' exonuclease domain maps to 154–315 (TDVDVVPMAF…GQVIYRDLEQ (162 aa)). Residues Asp-164, Glu-166, and Asp-302 each coordinate Mg(2+).

Belongs to the WRNexo family.

The protein resides in the nucleus. Has exonuclease activity on both single-stranded and duplex templates bearing overhangs, but not blunt ended duplex DNA, and cleaves in a 3'-5' direction. Essential for the formation of DNA replication focal centers. Has an important role in maintaining genome stability. The chain is 3'-5' exonuclease from Drosophila persimilis (Fruit fly).